The following is a 94-amino-acid chain: uncharacterized protein (94 aa).

Residues 1-19 (MKFSGLILGALALVSGAIA) form the signal peptide.

This sequence belongs to the protease inhibitor I9 family.

This is an uncharacterized protein from Neurospora crassa (strain ATCC 24698 / 74-OR23-1A / CBS 708.71 / DSM 1257 / FGSC 987).